The primary structure comprises 192 residues: Adenylate kinase (192 aa).

10–18 (GVPGVGSTT) contacts ATP.

It belongs to the archaeal adenylate kinase family. In terms of assembly, monomer.

The protein localises to the cytoplasm. The catalysed reaction is AMP + ATP = 2 ADP. The sequence is that of Adenylate kinase (adkA) from Methanococcus voltae.